Here is a 313-residue protein sequence, read N- to C-terminus: Cytochrome c biogenesis protein CcsA (313 aa).

8 consecutive transmembrane segments (helical) span residues 13–35, 43–63, 67–87, 96–116, 142–162, 219–239, 252–269, and 280–300; these read ISFS…EIAG, GMIA…IYSG, LSNL…IHMI, FLSS…TSGL, MLLS…LLVI, VIGI…VWAN, ETWA…LHTR, and AIVA…VNLL.

This sequence belongs to the CcmF/CycK/Ccl1/NrfE/CcsA family. In terms of assembly, may interact with Ccs1.

It localises to the plastid. The protein localises to the chloroplast thylakoid membrane. Required during biogenesis of c-type cytochromes (cytochrome c6 and cytochrome f) at the step of heme attachment. In Amborella trichopoda, this protein is Cytochrome c biogenesis protein CcsA.